Reading from the N-terminus, the 283-residue chain is MLIIETLPLLRQQIRRLRMEGKRVALVPTMGNLHDGHMKLVDEAKARADVVVVSIFVNPMQFDRPEDLARYPRTLQEDCEKLNKRKVDLVFAPSVKEIYPNGTETHTYVDVPGLSTMLEGASRPGHFRGVSTIVSKLFNLVQPDIACFGEKDFQQLALIRKMVADMGFDIEIVGVPIMRAKDGLALSSRNGYLTAEQRKIAPGLYKVLSSIADKLQAGERDLDEIIAIAGQELNEKGFRSDDIQIRDADTLLEISENSKRAVILVAAWLGDARLIDNKLVELA.

30–37 contributes to the ATP binding site; it reads MGNLHDGH. The active-site Proton donor is the histidine 37. Residue glutamine 61 coordinates (R)-pantoate. Glutamine 61 contributes to the beta-alanine binding site. 149–152 is a binding site for ATP; that stretch reads GEKD. Residue glutamine 155 coordinates (R)-pantoate. 186 to 189 contributes to the ATP binding site; that stretch reads LSSR.

The protein belongs to the pantothenate synthetase family. As to quaternary structure, homodimer.

Its subcellular location is the cytoplasm. It carries out the reaction (R)-pantoate + beta-alanine + ATP = (R)-pantothenate + AMP + diphosphate + H(+). The protein operates within cofactor biosynthesis; (R)-pantothenate biosynthesis; (R)-pantothenate from (R)-pantoate and beta-alanine: step 1/1. Catalyzes the condensation of pantoate with beta-alanine in an ATP-dependent reaction via a pantoyl-adenylate intermediate. The polypeptide is Pantothenate synthetase (Escherichia coli O6:K15:H31 (strain 536 / UPEC)).